We begin with the raw amino-acid sequence, 180 residues long: UPF0149 protein XC_0904 (180 aa).

It belongs to the UPF0149 family.

The polypeptide is UPF0149 protein XC_0904 (Xanthomonas campestris pv. campestris (strain 8004)).